We begin with the raw amino-acid sequence, 534 residues long: Melanopsin-B (534 aa).

At 1–32 (MDLGKTVEYGTHRQDAIAQIDVPDQVLYTIGS) the chain is on the extracellular side. The chain crosses the membrane as a helical span at residues 33-53 (FILIIGSVGIIGNMLVLYAFY). The Cytoplasmic portion of the chain corresponds to 54–64 (RNKKLRTAPNY). A helical transmembrane segment spans residues 65-85 (FIINLAISDFLMSATQAPVCF). Residues 86-102 (LSSLHREWILGDIGCNV) lie on the Extracellular side of the membrane. C100 and C178 are oxidised to a cystine. Residues 103–123 (YAFCGALFGITSMMTLLAISI) traverse the membrane as a helical segment. Topologically, residues 124 to 146 (NRYIVITKPLQSIQWSSKKRTSQ) are cytoplasmic. A helical membrane pass occupies residues 147–167 (IIVLVWMYSLMWSLAPLLGWS). Residues 168–198 (SYVPEGLRISCTWDYVTSTMSNRSYTMMLCC) lie on the Extracellular side of the membrane. The N-linked (GlcNAc...) asparagine glycan is linked to N189. Residues 199–219 (CVFFIPLIVISHCYLFMFLAI) form a helical membrane-spanning segment. Over 220–250 (RSTGRNVQKLGSYGRQSFLSQSMKNEWKMAK) the chain is Cytoplasmic. Residues 251-271 (IAFVIIIVFVLSWSPYACVTL) traverse the membrane as a helical segment. Residues 272-286 (IAWAGHGKSLTPYSK) lie on the Extracellular side of the membrane. A helical transmembrane segment spans residues 287–307 (TVPAVIAKASAIYNPIIYGII). The residue at position 294 (K294) is an N6-(retinylidene)lysine. Residues 308–534 (HPKYRETIHK…LYEVVERFLS (227 aa)) are Cytoplasmic-facing. A disordered region spans residues 478–501 (SNISETKEEHDNNSEEKSKRTEEE). The span at 482 to 499 (ETKEEHDNNSEEKSKRTE) shows a compositional bias: basic and acidic residues.

Belongs to the G-protein coupled receptor 1 family. Opsin subfamily. In terms of tissue distribution, highest level in the iris, high level in the inner nuclear layer, possibly in horizontal cells, and lowest level in retinal pigment epithelium. Expressed in melanophore cells of the skin.

The protein resides in the cell membrane. In terms of biological role, photoreceptor implicated in non-image-forming responses to light. May be able to isomerize covalently bound all-trans retinal back to 11-cis retinal. The sequence is that of Melanopsin-B from Xenopus laevis (African clawed frog).